Reading from the N-terminus, the 608-residue chain is Glutamyl-tRNA(Gln) amidotransferase subunit E (608 aa).

This sequence belongs to the GatB/GatE family. GatE subfamily. Heterodimer of GatD and GatE.

The catalysed reaction is L-glutamyl-tRNA(Gln) + L-glutamine + ATP + H2O = L-glutaminyl-tRNA(Gln) + L-glutamate + ADP + phosphate + H(+). Allows the formation of correctly charged Gln-tRNA(Gln) through the transamidation of misacylated Glu-tRNA(Gln) in organisms which lack glutaminyl-tRNA synthetase. The reaction takes place in the presence of glutamine and ATP through an activated gamma-phospho-Glu-tRNA(Gln). The GatDE system is specific for glutamate and does not act on aspartate. The sequence is that of Glutamyl-tRNA(Gln) amidotransferase subunit E from Pyrobaculum aerophilum (strain ATCC 51768 / DSM 7523 / JCM 9630 / CIP 104966 / NBRC 100827 / IM2).